The primary structure comprises 308 residues: tRNA dimethylallyltransferase (308 aa).

Glycine 11–serine 18 serves as a coordination point for ATP. A substrate-binding site is contributed by threonine 13–serine 18. Residues aspartate 36–glutamine 39 form an interaction with substrate tRNA region.

It belongs to the IPP transferase family. In terms of assembly, monomer. Mg(2+) is required as a cofactor.

It carries out the reaction adenosine(37) in tRNA + dimethylallyl diphosphate = N(6)-dimethylallyladenosine(37) in tRNA + diphosphate. Catalyzes the transfer of a dimethylallyl group onto the adenine at position 37 in tRNAs that read codons beginning with uridine, leading to the formation of N6-(dimethylallyl)adenosine (i(6)A). The chain is tRNA dimethylallyltransferase from Bdellovibrio bacteriovorus (strain ATCC 15356 / DSM 50701 / NCIMB 9529 / HD100).